The sequence spans 1841 residues: Cell division control protein 12 (1841 aa).

Polar residues-rich tracts occupy residues 1–25 (MRNS…TPSA) and 46–63 (SIES…QSVT). 3 disordered regions span residues 1–63 (MRNS…QSVT), 78–134 (NSHN…GPRL), and 152–181 (PPVH…RTKH). The region spanning 232–620 (TRPPSLDQLI…RILLNSKVSN (389 aa)) is the GBD/FH3 domain. Residues 674-715 (LGAEDLIAKLNKEVEDQKDVILSQKRTNETLKTEIDALQKSH) are a coiled coil. In terms of domain architecture, FH1 spans 740–972 (GSTNSKERII…VSPAVSNNIS (233 aa)). Residues 980-1391 (TGLTRRPTRR…QHRRLNLVNN (412 aa)) form the FH2 domain. Residues 1260-1290 (TEAAKLNIEAIEQECSELIRGCQNLQIDCDS) adopt a coiled-coil conformation. Disordered regions lie at residues 1445 to 1661 (EAPN…ENNL), 1696 to 1715 (TTTT…INTI), and 1735 to 1758 (KSNK…GSNK). 2 stretches are compositionally biased toward polar residues: residues 1447–1456 (PNTSTKSSPA) and 1483–1497 (SEST…NITP). Residues 1499-1516 (KKGEVSSKAKKGYNYEKR) show a composition bias toward basic and acidic residues. The segment covering 1539–1553 (GRSASYTFSDPSSLE) has biased composition (polar residues). At S1541 the chain carries Phosphoserine. A Phosphotyrosine modification is found at Y1544. The span at 1554-1567 (DSNRQKPFNGEKFR) shows a compositional bias: basic and acidic residues. Over residues 1568 to 1577 (RFSSKSRRGS) the composition is skewed to basic residues. Residues 1594-1604 (INNNQTSPQNK) are compositionally biased toward polar residues. The segment covering 1605–1621 (PSKESLKSDTISNEKKV) has biased composition (basic and acidic residues). Polar residues predominate over residues 1630 to 1641 (NLLTPTISNGTR).

Belongs to the formin homology family. BNI1 subfamily. In terms of assembly, interacts with profilin and actin at the FH1 and FH2 domains respectively.

The protein resides in the nucleus. Functionally, plays a role in the cell cycle. Involved in cytokinesis. Component of the cell division ring. In the absence of profilin, caps the barbed end of actin filaments, thus preventing subunit addition and dissociation. In the presence of profilin, nucleates actin filaments that grow rapidly from their barbed ends. The protein is Cell division control protein 12 (cdc12) of Schizosaccharomyces pombe (strain 972 / ATCC 24843) (Fission yeast).